The sequence spans 231 residues: Elongation factor 1-delta (231 aa).

Positions 75–136 (SGVTVEGNAP…AAAAAAKPAK (62 aa)) are disordered. The segment covering 101–117 (ADDDDDDDVDLFGEETE) has biased composition (acidic residues). Residues 118 to 127 (EEKKAAEERA) are compositionally biased toward basic and acidic residues.

This sequence belongs to the EF-1-beta/EF-1-delta family. As to quaternary structure, EF-1 is composed of 4 subunits: alpha, beta (1B-alpha=beta'), delta (1B-beta), and gamma (1B-gamma).

EF-1-beta and EF-1-beta' stimulate the exchange of GDP bound to EF-1-alpha to GTP. This Beta vulgaris (Sugar beet) protein is Elongation factor 1-delta.